Consider the following 492-residue polypeptide: Ribose import ATP-binding protein RbsA (492 aa).

2 ABC transporter domains span residues 3–239 and 249–492; these read IEMK…VGRS and AEIR…TGGQ. An ATP-binding site is contributed by 35–42; that stretch reads GENGAGKS.

This sequence belongs to the ABC transporter superfamily. Ribose importer (TC 3.A.1.2.1) family. In terms of assembly, the complex is composed of an ATP-binding protein (RbsA), two transmembrane proteins (RbsC) and a solute-binding protein (RbsB).

The protein localises to the cell membrane. It carries out the reaction D-ribose(out) + ATP + H2O = D-ribose(in) + ADP + phosphate + H(+). Functionally, part of the ABC transporter complex RbsABC involved in ribose import. Responsible for energy coupling to the transport system. This is Ribose import ATP-binding protein RbsA from Lactococcus lactis subsp. lactis (strain IL1403) (Streptococcus lactis).